The following is a 360-amino-acid chain: Phosphoserine aminotransferase (360 aa).

Residue Arg-41 coordinates L-glutamate. Pyridoxal 5'-phosphate-binding residues include Trp-101, Thr-152, Asp-172, and Gln-195. Lys-196 is modified (N6-(pyridoxal phosphate)lysine). Position 237–238 (237–238 (NT)) interacts with pyridoxal 5'-phosphate.

Belongs to the class-V pyridoxal-phosphate-dependent aminotransferase family. SerC subfamily. Homodimer. The cofactor is pyridoxal 5'-phosphate.

The protein resides in the cytoplasm. The catalysed reaction is O-phospho-L-serine + 2-oxoglutarate = 3-phosphooxypyruvate + L-glutamate. It carries out the reaction 4-(phosphooxy)-L-threonine + 2-oxoglutarate = (R)-3-hydroxy-2-oxo-4-phosphooxybutanoate + L-glutamate. The protein operates within amino-acid biosynthesis; L-serine biosynthesis; L-serine from 3-phospho-D-glycerate: step 2/3. It functions in the pathway cofactor biosynthesis; pyridoxine 5'-phosphate biosynthesis; pyridoxine 5'-phosphate from D-erythrose 4-phosphate: step 3/5. Functionally, catalyzes the reversible conversion of 3-phosphohydroxypyruvate to phosphoserine and of 3-hydroxy-2-oxo-4-phosphonooxybutanoate to phosphohydroxythreonine. The polypeptide is Phosphoserine aminotransferase (Burkholderia ambifaria (strain ATCC BAA-244 / DSM 16087 / CCUG 44356 / LMG 19182 / AMMD) (Burkholderia cepacia (strain AMMD))).